The primary structure comprises 100 residues: UPF0213 protein YhbQ (100 aa).

Residues 2–77 (TPWYLYLIRT…KQLTKRQKER (76 aa)) form the GIY-YIG domain.

This sequence belongs to the UPF0213 family.

The chain is UPF0213 protein YhbQ from Escherichia coli O8 (strain IAI1).